Here is a 296-residue protein sequence, read N- to C-terminus: D-alanine--D-alanine ligase (296 aa).

The ATP-grasp domain occupies 103–293 (KEILMHYRMP…FDSFVKRIIE (191 aa)). 129 to 180 (ISFPVAVKPSSGGSSIATFKVKSIQELKHAYEEASKYGEVMIEQWVTGKEIT) provides a ligand contact to ATP. Mg(2+)-binding residues include D247, E260, and N262.

Belongs to the D-alanine--D-alanine ligase family. The cofactor is Mg(2+). Mn(2+) serves as cofactor.

The protein resides in the cytoplasm. It carries out the reaction 2 D-alanine + ATP = D-alanyl-D-alanine + ADP + phosphate + H(+). It participates in cell wall biogenesis; peptidoglycan biosynthesis. Cell wall formation. This chain is D-alanine--D-alanine ligase, found in Francisella tularensis subsp. tularensis (strain WY96-3418).